The following is a 773-amino-acid chain: Ribosomal protein S6 kinase alpha-4 (773 aa).

The region spanning 33–301 is the Protein kinase 1 domain; the sequence is FALLKVLGTG…AQEVKSHPFF (269 aa). ATP is bound by residues 39–47 and Lys65; that span reads LGTGAYGKV. Asp161 acts as the Proton acceptor in catalysis. Residue Ser196 is modified to Phosphoserine; by autocatalysis. Positions 302–371 constitute an AGC-kinase C-terminal domain; the sequence is QGLDWVALAA…VAPSILFDHN (70 aa). A Phosphoserine; by MAPK1, MAPK3 and MAPK14 modification is found at Ser343. Position 347 is a phosphoserine (Ser347). Phosphoserine; by autocatalysis is present on residues Ser360 and Ser365. ATP contacts are provided by residues 417–425 and Lys440; that span reads LGQGSFSVC. The Protein kinase 2 domain occupies 417-674; it reads LGQGSFSVCR…LEGLRSSSWL (258 aa). The active-site Proton acceptor is the Asp530. Thr542 carries the post-translational modification Phosphothreonine. Residue Thr568 is modified to Phosphothreonine; by MAPK1, MAPK3 and MAPK14. Phosphoserine occurs at positions 634 and 678. Disordered stretches follow at residues 674 to 696 and 728 to 773; these read LQDG…SSGP and AKRR…LSPS. Thr687 is subject to Phosphothreonine. A phosphoserine; by autocatalysis mark is found at Ser737 and Ser745.

This sequence belongs to the protein kinase superfamily. AGC Ser/Thr protein kinase family. S6 kinase subfamily. Forms a complex with either MAPK1/ERK2 or MAPK3/ERK1 in quiescent cells which transiently dissociates following mitogenic stimulation. Also associates with MAPK14/p38-alpha. Activated RPS6KA4 associates with and phosphorylates the NF-kappa-B p65 subunit RELA. It depends on Mg(2+) as a cofactor. Post-translationally, ser-343 and Thr-568 phosphorylation is required for kinase activity. Ser-343 and Ser-196 are autophosphorylated by the C-terminal kinase domain, and their phosphorylation is essential for the catalytic activity of the N-terminal kinase domain. Phosphorylated at Ser-343, Thr-568 and Thr-687 by MAPK1/ERK2, MAPK3/ERK1 and MAPK14/p38-alpha. Autophosphorylated at Ser-737 and Ser-745 by the N-terminal kinase domain.

The protein resides in the nucleus. The catalysed reaction is L-seryl-[protein] + ATP = O-phospho-L-seryl-[protein] + ADP + H(+). It carries out the reaction L-threonyl-[protein] + ATP = O-phospho-L-threonyl-[protein] + ADP + H(+). Its activity is regulated as follows. Activated by phosphorylation at Ser-343, Thr-568 and Thr-687 by MAPK1/ERK2, MAPK3/ERK1 and MAPK14/p38-alpha, and by further autophosphorylation of Ser-196, Ser-360 and Ser-365 by the activated C-terminal kinase domain. In terms of biological role, serine/threonine-protein kinase that is required for the mitogen or stress-induced phosphorylation of the transcription factors CREB1 and ATF1 and for the regulation of the transcription factor RELA, and that contributes to gene activation by histone phosphorylation and functions in the regulation of inflammatory genes. Phosphorylates CREB1 and ATF1 in response to mitogenic or stress stimuli such as UV-C irradiation, epidermal growth factor (EGF) and anisomycin. Plays an essential role in the control of RELA transcriptional activity in response to TNF. Phosphorylates 'Ser-10' of histone H3 in response to mitogenics, stress stimuli and EGF, which results in the transcriptional activation of several immediate early genes, including proto-oncogenes c-fos/FOS and c-jun/JUN. May also phosphorylate 'Ser-28' of histone H3. Mediates the mitogen- and stress-induced phosphorylation of high mobility group protein 1 (HMGN1/HMG14). In lipopolysaccharide-stimulated primary macrophages, acts downstream of the Toll-like receptor TLR4 to limit the production of pro-inflammatory cytokines. Functions probably by inducing transcription of the MAP kinase phosphatase DUSP1 and the anti-inflammatory cytokine interleukin 10 (IL10), via CREB1 and ATF1 transcription factors. The chain is Ribosomal protein S6 kinase alpha-4 (Rps6ka4) from Mus musculus (Mouse).